A 172-amino-acid polypeptide reads, in one-letter code: Translationally-controlled tumor protein (172 aa).

One can recognise a TCTP domain in the interval 1–172; it reads MIIYRDLISH…FKDGLEMEKC (172 aa). S46 is modified (phosphoserine; by PLK1). At S53 the chain carries Phosphoserine. The residue at position 64 (S64) is a Phosphoserine; by PLK1. Positions 70–172 are required for reduction of TSC22D1 protein stability; the sequence is VDIVMNHHLQ…FKDGLEMEKC (103 aa).

This sequence belongs to the TCTP family. As to quaternary structure, homodimer. Interacts with STEAP3. Interacts with TSC22D1; interaction results in the destabilization of TSC22D1 protein. As to expression, found in several healthy and tumoral cells including erythrocytes, hepatocytes, macrophages, platelets, keratinocytes, erythroleukemia cells, gliomas, melanomas, hepatoblastomas, and lymphomas. It cannot be detected in kidney and renal cell carcinoma (RCC). Expressed in placenta and prostate.

Its subcellular location is the cytoplasm. Involved in calcium binding and microtubule stabilization. Acts as a negative regulator of TSC22D1-mediated apoptosis, via interaction with and destabilization of TSC22D1 protein. This chain is Translationally-controlled tumor protein (TPT1), found in Homo sapiens (Human).